An 815-amino-acid polypeptide reads, in one-letter code: Protein SEY1 homolog (815 aa).

Over 1–737 (MRQIIDYDCN…IQSTGRQPQN (737 aa)) the chain is Cytoplasmic. Residues 28 to 260 (TLGFNVISIL…LPKDYTRRIP (233 aa)) enclose the GB1/RHD3-type G domain. 38 to 45 (GCQSTGKS) is a binding site for GTP. Residues 298-321 (AKDDILDGYKKSIKDLQKKMEKRE) are a coiled coil. Residues 738-758 (IPWWIYLLIIILGFDEITYVL) traverse the membrane as a helical segment. Residues 759 to 761 (TSP) are Lumenal-facing. The helical transmembrane segment at 762 to 782 (VLVTLLLLLASFIYSYLTGNF) threads the bilayer. At 783-815 (SSFCNYSQQFVIISTKILHYISGAIHSSLDNRK) the chain is on the cytoplasmic side.

The protein belongs to the TRAFAC class dynamin-like GTPase superfamily. GB1/RHD3 GTPase family. RHD3 subfamily.

The protein resides in the endoplasmic reticulum membrane. Probable GTP-binding protein that may be involved in cell development. The chain is Protein SEY1 homolog from Cryptosporidium hominis.